A 506-amino-acid polypeptide reads, in one-letter code: Exopolyphosphatase (506 aa).

It belongs to the GppA/Ppx family. In terms of assembly, homodimer. Requires Mg(2+) as cofactor.

It localises to the cell membrane. It carries out the reaction [phosphate](n) + H2O = [phosphate](n-1) + phosphate + H(+). It catalyses the reaction [phosphate](n) + ATP = [phosphate](n+1) + ADP. Exopolyphosphatase activity is stimulated by NH(4)(+) and K(+). Phosphotransferase activity is insensitive to the addition of K(+) or NH(4)(+) ions. In terms of biological role, degradation of inorganic polyphosphates (polyP). Releases orthophosphate processively from the ends of the polyP chain. Also has polyphosphate:ADP phosphotransferase activity, catalyzing the production of ATP from ADP and polyP. The polypeptide is Exopolyphosphatase (Pseudomonas aeruginosa (strain ATCC 15692 / DSM 22644 / CIP 104116 / JCM 14847 / LMG 12228 / 1C / PRS 101 / PAO1)).